Reading from the N-terminus, the 320-residue chain is Probable trehalose-phosphate phosphatase C (320 aa).

This sequence belongs to the trehalose phosphatase family. A divalent metal cation serves as cofactor.

It catalyses the reaction alpha,alpha-trehalose 6-phosphate + H2O = alpha,alpha-trehalose + phosphate. Its pathway is glycan biosynthesis; trehalose biosynthesis. Its function is as follows. Removes the phosphate from trehalose 6-phosphate to produce free trehalose. Trehalose accumulation in plant may improve abiotic stress tolerance. This Arabidopsis thaliana (Mouse-ear cress) protein is Probable trehalose-phosphate phosphatase C (TPPC).